We begin with the raw amino-acid sequence, 241 residues long: Ubiquinone biosynthesis O-methyltransferase (241 aa).

S-adenosyl-L-methionine is bound by residues Arg-46, Gly-66, Asp-87, and Met-131.

The protein belongs to the methyltransferase superfamily. UbiG/COQ3 family.

It catalyses the reaction a 3-demethylubiquinol + S-adenosyl-L-methionine = a ubiquinol + S-adenosyl-L-homocysteine + H(+). The catalysed reaction is a 3-(all-trans-polyprenyl)benzene-1,2-diol + S-adenosyl-L-methionine = a 2-methoxy-6-(all-trans-polyprenyl)phenol + S-adenosyl-L-homocysteine + H(+). It participates in cofactor biosynthesis; ubiquinone biosynthesis. Functionally, O-methyltransferase that catalyzes the 2 O-methylation steps in the ubiquinone biosynthetic pathway. The polypeptide is Ubiquinone biosynthesis O-methyltransferase (Bordetella bronchiseptica (strain ATCC BAA-588 / NCTC 13252 / RB50) (Alcaligenes bronchisepticus)).